We begin with the raw amino-acid sequence, 548 residues long: Chaperonin GroEL (548 aa).

Residues 30–33 (TLGP), K51, 87–91 (DGTTT), G415, 479–481 (NAA), and D495 contribute to the ATP site.

This sequence belongs to the chaperonin (HSP60) family. In terms of assembly, forms a cylinder of 14 subunits composed of two heptameric rings stacked back-to-back. Interacts with the co-chaperonin GroES.

Its subcellular location is the cytoplasm. The catalysed reaction is ATP + H2O + a folded polypeptide = ADP + phosphate + an unfolded polypeptide.. Together with its co-chaperonin GroES, plays an essential role in assisting protein folding. The GroEL-GroES system forms a nano-cage that allows encapsulation of the non-native substrate proteins and provides a physical environment optimized to promote and accelerate protein folding. This Ectopseudomonas mendocina (strain ymp) (Pseudomonas mendocina) protein is Chaperonin GroEL.